Here is a 519-residue protein sequence, read N- to C-terminus: cAMP-dependent protein kinase catalytic subunit (519 aa).

The disordered stretch occupies residues 1–195; sequence MLPDTGILSP…SQTLQKAENA (195 aa). 3 stretches are compositionally biased toward polar residues: residues 10 to 25, 116 to 159, and 173 to 191; these read PFTT…SQTL, VTPS…TSPI, and TPVN…TLQK. Residues 208–463 enclose the Protein kinase domain; sequence FNFQRTLGTG…SRSVLEHPWF (256 aa). Residues 214–222 and Lys237 each bind ATP; that span reads LGTGSFGRV. Asp331 acts as the Proton acceptor in catalysis. The 56-residue stretch at 464-519 folds into the AGC-kinase C-terminal domain; it reads AEVNWERLLSKQIEPPYVPPVRGGIGDASLFDKYPEETEEYGKDGPDQYGHFFTDF.

Belongs to the protein kinase superfamily. Ser/Thr protein kinase family.

It catalyses the reaction L-seryl-[protein] + ATP = O-phospho-L-seryl-[protein] + ADP + H(+). It carries out the reaction L-threonyl-[protein] + ATP = O-phospho-L-threonyl-[protein] + ADP + H(+). Activated by cAMP. Functionally, functions downstream of adenylate cyclase to regulate trap-development for nematode capture. The sequence is that of cAMP-dependent protein kinase catalytic subunit from Arthrobotrys oligospora (strain ATCC 24927 / CBS 115.81 / DSM 1491) (Nematode-trapping fungus).